The sequence spans 280 residues: Feruloyl esterase 1 (280 aa).

An N-terminal signal peptide occupies residues 1–20 (MKAFATRALAFSVAAGQALA). 3 disulfide bridges follow: Cys-49/Cys-278, Cys-111/Cys-114, and Cys-247/Cys-254. An N-linked (GlcNAc...) asparagine glycan is attached at Asn-99. Ser-153 serves as the catalytic Nucleophile. The active-site Charge relay system is Asp-214. The Charge relay system role is filled by His-267.

Belongs to the AB hydrolase superfamily. FaeA family. Post-translationally, glycosylated.

The protein resides in the secreted. The catalysed reaction is feruloyl-polysaccharide + H2O = ferulate + polysaccharide.. Metal or basic ions Mn(2+), Ni(+), Mg(2+), and NH(4)(+) decrease the activity by 4.4% to 14.1%. The enzymatic activity is inhibited by Zn(2+) at a low concentration (1 mM) but not a high concentration (5 mM). Loses about a quarter of activity by the addition of 1 mM of Cu(2+) or Fe(3+) and activity is completely suppressed when the concentration was up to 5 mM. Low concentrations (0.25 and 0.5 M) of NaCl improve the activity by 5.6 % or 8.3%, respectively. Its function is as follows. Involved in degradation of plant cell walls. Hydrolyzes the feruloyl-arabinose ester bond in arabinoxylans, and the feruloyl-galactose ester bond in pectin. This Penicillium parvum (Eupenicillium parvum) protein is Feruloyl esterase 1.